Reading from the N-terminus, the 418-residue chain is Tyrosine--tRNA ligase (418 aa).

L-tyrosine is bound at residue Tyr34. The 'HIGH' region motif lies at 39–48 (PTADSLHLGH). Residues Tyr169 and Gln173 each contribute to the L-tyrosine site. A 'KMSKS' region motif is present at residues 229–233 (KFGKS). Lys232 provides a ligand contact to ATP. An S4 RNA-binding domain is found at 352-418 (NNIVELLVSS…GKKKYFVLTY (67 aa)).

The protein belongs to the class-I aminoacyl-tRNA synthetase family. TyrS type 1 subfamily. In terms of assembly, homodimer.

Its subcellular location is the cytoplasm. The catalysed reaction is tRNA(Tyr) + L-tyrosine + ATP = L-tyrosyl-tRNA(Tyr) + AMP + diphosphate + H(+). Functionally, catalyzes the attachment of tyrosine to tRNA(Tyr) in a two-step reaction: tyrosine is first activated by ATP to form Tyr-AMP and then transferred to the acceptor end of tRNA(Tyr). The chain is Tyrosine--tRNA ligase from Streptococcus pneumoniae (strain 70585).